A 297-amino-acid polypeptide reads, in one-letter code: Myozenin-1 (297 aa).

The disordered stretch occupies residues M1–L34. S82 is modified (phosphoserine). The segment at F105–E172 is disordered. A compositionally biased stretch (low complexity) spans R118–D128. The span at S136–G162 shows a compositional bias: gly residues.

Belongs to the myozenin family. In terms of assembly, interacts with ACTN2, ACTN3, FLNA, FLNB, FLNC, LDB3, PPP3CA and TCAP. Interacts via its C-terminal region with MYOT.

The protein localises to the nucleus. It localises to the cell projection. It is found in the pseudopodium. Functionally, myozenins may serve as intracellular binding proteins involved in linking Z-disk proteins such as alpha-actinin, gamma-filamin, TCAP/telethonin, LDB3/ZASP and localizing calcineurin signaling to the sarcomere. Plays an important role in the modulation of calcineurin signaling. May play a role in myofibrillogenesis. The sequence is that of Myozenin-1 (MYOZ1) from Bos taurus (Bovine).